The chain runs to 400 residues: Leucine-rich repeat flightless-interacting protein 2 (400 aa).

Disordered regions lie at residues 1-28 and 53-119; these read MGTP…SNID and LERQ…LSEV. S18 carries the post-translational modification Phosphoserine. Residues 29 to 71 are a coiled coil; it reads REAEARLAAKRAARAEARDIRMRELERQQKELDEKSDKQYAEN. The span at 53–68 shows a compositional bias: basic and acidic residues; that stretch reads LERQQKELDEKSDKQY. Polar residues predominate over residues 73 to 102; the sequence is TRPSSRNSASATTPLSGNSSRRVSGDTSSL. A phosphoserine mark is found at S77, S80, S88, S92, and S96. Residue T99 is modified to Phosphothreonine. 2 positions are modified to phosphoserine: S100 and S101. 2 coiled-coil regions span residues 106-202 and 245-393; these read DTSL…LIEK and LDVR…KANR.

This sequence belongs to the LRRFIP family. Interacts with DVL3 and FLII. Weakly interacts with MYD88 in resting cells. Following LPS-stimulation, the interaction with MYD88 is rapidly enhanced; the complex gradually dissociates to basal levels after 6 hours of stimulation. Interaction with MYD88 is regulated by LPS-induced phosphorylation. In the presence of LPS, competes with FLII for MYD88-binding.

Its function is as follows. May function as activator of the canonical Wnt signaling pathway, in association with DVL3, upstream of CTNNB1/beta-catenin. Positively regulates Toll-like receptor (TLR) signaling in response to agonist probably by competing with the negative FLII regulator for MYD88-binding. The chain is Leucine-rich repeat flightless-interacting protein 2 (LRRFIP2) from Bos taurus (Bovine).